The sequence spans 161 residues: Ubiquitin-conjugating enzyme E2Q-like protein 1 (161 aa).

The UBC core domain occupies 1 to 154; that stretch reads MKELQDIARL…VKTHEKYGWV (154 aa). The active-site Glycyl thioester intermediate is the Cys-88.

It belongs to the ubiquitin-conjugating enzyme family. Interacts with FBXW7.

The protein resides in the nucleus. It carries out the reaction S-ubiquitinyl-[E1 ubiquitin-activating enzyme]-L-cysteine + [E2 ubiquitin-conjugating enzyme]-L-cysteine = [E1 ubiquitin-activating enzyme]-L-cysteine + S-ubiquitinyl-[E2 ubiquitin-conjugating enzyme]-L-cysteine.. It functions in the pathway protein modification; protein ubiquitination. Probable E2 ubiquitin-protein ligase that catalyzes the covalent attachment of ubiquitin to target proteins. May facilitate the monoubiquitination and degradation of MTOR and CCNE1 through interaction with FBXW7. In Mus musculus (Mouse), this protein is Ubiquitin-conjugating enzyme E2Q-like protein 1 (Ube2ql1).